The sequence spans 1004 residues: Sodium/potassium-transporting ATPase subunit alpha-B (1004 aa).

2 consecutive transmembrane segments (helical) span residues 76-96 (LFGG…LAYG) and 110-126 (NLYL…VTGI). The tract at residues 197-216 (SSLTGESEPQARSPEFTNDN) is disordered. The next 2 membrane-spanning stretches (helical) occupy residues 272 to 294 (FIHI…AFVL) and 301 to 329 (AVVF…TLTA). Asp-357 serves as the catalytic 4-aspartylphosphate intermediate. An ATP-binding site is contributed by Lys-489. Residues Asp-698 and Asp-702 each contribute to the Mg(2+) site. Helical transmembrane passes span 768 to 791 (ISPF…ILCI), 828 to 855 (ERLI…VIMA), 897 to 918 (SSCH…LIIS), and 934 to 959 (ILNF…DKGL).

The protein belongs to the cation transport ATPase (P-type) (TC 3.A.3) family. Type IIC subfamily. As to quaternary structure, the sodium/potassium-transporting ATPase is composed of a catalytic alpha subunit, an auxiliary non-catalytic beta subunit and an additional regulatory subunit.

It is found in the cell membrane. It catalyses the reaction K(+)(out) + Na(+)(in) + ATP + H2O = K(+)(in) + Na(+)(out) + ADP + phosphate + H(+). Its function is as follows. This is the catalytic component of the active enzyme, which catalyzes the hydrolysis of ATP coupled with the exchange of sodium and potassium ions across the plasma membrane. This action creates the electrochemical gradient of sodium and potassium ions, providing the energy for active transport of various nutrients. This is Sodium/potassium-transporting ATPase subunit alpha-B from Artemia franciscana (Brine shrimp).